We begin with the raw amino-acid sequence, 218 residues long: Probable nicotinate-nucleotide adenylyltransferase (218 aa).

The protein belongs to the NadD family.

It catalyses the reaction nicotinate beta-D-ribonucleotide + ATP + H(+) = deamido-NAD(+) + diphosphate. The protein operates within cofactor biosynthesis; NAD(+) biosynthesis; deamido-NAD(+) from nicotinate D-ribonucleotide: step 1/1. In terms of biological role, catalyzes the reversible adenylation of nicotinate mononucleotide (NaMN) to nicotinic acid adenine dinucleotide (NaAD). This chain is Probable nicotinate-nucleotide adenylyltransferase, found in Helicobacter hepaticus (strain ATCC 51449 / 3B1).